Reading from the N-terminus, the 292-residue chain is HTH-type transcriptional regulator BlaA (292 aa).

An HTH lysR-type domain is found at 5–62 (LPLNALRAFEASARHLNFTKAALELYVTQGAVSQQVRMLEERLGVILFKRLPRGLEMT). Positions 22–41 (FTKAALELYVTQGAVSQQVR) form a DNA-binding region, H-T-H motif.

It belongs to the LysR transcriptional regulatory family.

Positive regulator of the expression of the gene (blaB) for beta-lactamase. The sequence is that of HTH-type transcriptional regulator BlaA (blaA) from Proteus vulgaris.